The sequence spans 412 residues: Multifunctional CCA protein (412 aa).

ATP contacts are provided by G8 and R11. The CTP site is built by G8 and R11. Mg(2+) contacts are provided by E21 and D23. 3 residues coordinate ATP: R91, R137, and R140. Positions 91, 137, and 140 each coordinate CTP. Residues 228-329 (CGIHTLMSLQ…WRLLQRLDVL (102 aa)) form the HD domain.

This sequence belongs to the tRNA nucleotidyltransferase/poly(A) polymerase family. Bacterial CCA-adding enzyme type 1 subfamily. In terms of assembly, monomer. Can also form homodimers and oligomers. Mg(2+) serves as cofactor. Ni(2+) is required as a cofactor.

The catalysed reaction is a tRNA precursor + 2 CTP + ATP = a tRNA with a 3' CCA end + 3 diphosphate. It catalyses the reaction a tRNA with a 3' CCA end + 2 CTP + ATP = a tRNA with a 3' CCACCA end + 3 diphosphate. In terms of biological role, catalyzes the addition and repair of the essential 3'-terminal CCA sequence in tRNAs without using a nucleic acid template. Adds these three nucleotides in the order of C, C, and A to the tRNA nucleotide-73, using CTP and ATP as substrates and producing inorganic pyrophosphate. tRNA 3'-terminal CCA addition is required both for tRNA processing and repair. Also involved in tRNA surveillance by mediating tandem CCA addition to generate a CCACCA at the 3' terminus of unstable tRNAs. While stable tRNAs receive only 3'-terminal CCA, unstable tRNAs are marked with CCACCA and rapidly degraded. This is Multifunctional CCA protein from Acinetobacter baumannii (strain SDF).